We begin with the raw amino-acid sequence, 642 residues long: DNA primase (642 aa).

The CHC2-type zinc-finger motif lies at 41-65 (CPFHNEKSPSFHVRPNHGHFHCFGC). The region spanning 262-348 (HQAVVVEGYT…AGKSFVAVAA (87 aa)) is the Toprim domain. The Mg(2+) site is built by Glu-268, Asp-319, and Asp-321. The disordered stretch occupies residues 445–480 (NRRSVPERTRRRSVSVEQSPFMQPPGAPADQLAARP).

It belongs to the DnaG primase family. In terms of assembly, monomer. Interacts with DnaB. It depends on Zn(2+) as a cofactor. Mg(2+) is required as a cofactor.

The catalysed reaction is ssDNA + n NTP = ssDNA/pppN(pN)n-1 hybrid + (n-1) diphosphate.. In terms of biological role, RNA polymerase that catalyzes the synthesis of short RNA molecules used as primers for DNA polymerase during DNA replication. This chain is DNA primase, found in Mycobacterium leprae (strain TN).